The primary structure comprises 88 residues: Alpha-latrotoxin associated low molecular weight protein 2 (88 aa).

Positions 1 to 19 (MLKLICIAFLVTVLTLVAG) are cleaved as a signal peptide. Cystine bridges form between cysteine 30–cysteine 66, cysteine 46–cysteine 62, and cysteine 49–cysteine 75.

This sequence belongs to the arthropod CHH/MIH/GIH/VIH hormone family. As to expression, expressed by the venom gland.

The protein resides in the secreted. Its function is as follows. May increase the toxicity of alpha-latrotoxin and/or other venom components. Is non-toxic to mice and to the cockroach Periplaneta americana. This Latrodectus hesperus (Western black widow spider) protein is Alpha-latrotoxin associated low molecular weight protein 2.